The following is a 791-amino-acid chain: Interleukin-17 receptor C (791 aa).

The N-terminal stretch at 1-20 (MPVPWFLLSLALGRSPVVLS) is a signal peptide. The Extracellular portion of the chain corresponds to 21-538 (LERLVGPQDA…CPMDKYIHKR (518 aa)). 2 N-linked (GlcNAc...) asparagine glycosylation sites follow: Asn189 and Asn257. A disulfide bridge connects residues Cys265 and Cys277. Residues Asn284, Asn297, Asn324, and Asn334 are each glycosylated (N-linked (GlcNAc...) asparagine). Intrachain disulfides connect Cys341/Cys391, Cys343/Cys359, and Cys400/Cys409. N-linked (GlcNAc...) asparagine glycans are attached at residues Asn420, Asn443, and Asn477. Cys439 and Cys453 are disulfide-bonded. Cystine bridges form between Cys481/Cys488 and Cys515/Cys529. A helical transmembrane segment spans residues 539-559 (WALVWLACLLFAAALSLILLL). Over 560-791 (KKDHAKGWLR…GAGPGAGDGT (232 aa)) the chain is Cytoplasmic. The SEFIR domain maps to 583–735 (GRAALLLYSA…LPSQLPDFLG (153 aa)). A disordered region spans residues 762–791 (ALDSYFHPPGTPAPGRGVGPGAGPGAGDGT). Gly residues predominate over residues 777-791 (RGVGPGAGPGAGDGT).

Homodimer; disulfide-linked. Heterodimer with IL17RA. Heterodimerization with IL17RA is independent of the cytoplasmic tail. Associates with non-glycosylated IL17RA constitutively. Binding of IL17A and IL17F induces association with glycosylated IL17RA. Forms complexes with 2:1 binding stoichiometry: two receptor chains for one interleukin molecule. IL17A homodimer preferentially drives the formation of IL17RA-IL17RC heterodimeric receptor complex, whereas IL17F homodimer forms predominantly complexes with IL17RC homodimer. IL17A-IL17F forms complexes with IL17RA-IL17RC, but with lower affinity when compared to IL17A homodimer. IL17RC chain cannot distinguish between IL17A and IL17F molecules, potentially enabling the formation of topologically distinct complexes. Interacts (through SEFIR domain and extended downstream region) with TRAF3IP2/ACT1 (phosphorylated). As to expression, expressed in prostate, skeletal muscle, kidney and placenta (at protein level). Expressed in brain, cartilage, colon, heart, intestine, kidney, liver, lung, muscle, placenta, and prostate. Also detected in thyroid, trachea and adrenal gland. Low expression in thymus and leukocytes.

It is found in the cell membrane. In terms of biological role, receptor for IL17A and IL17F, major effector cytokines of innate and adaptive immune system involved in antimicrobial host defense and maintenance of tissue integrity. Receptor for IL17A and IL17F, major effector cytokines of innate and adaptive immune system involved in antimicrobial host defense and maintenance of tissue integrity. Receptor for IL17A and IL17F homodimers as part of a heterodimeric complex with IL17RA. Receptor for the heterodimer formed by IL17A and IL17B as part of a heterodimeric complex with IL17RA. Has also been shown to be the cognate receptor for IL17F and to bind IL17A with high affinity without the need for IL17RA. Upon binding of IL17F homodimer triggers downstream activation of TRAF6 and NF-kappa-B signaling pathway. Induces transcriptional activation of IL33, a potent cytokine that stimulates group 2 innate lymphoid cells and adaptive T-helper 2 cells involved in pulmonary allergic response to fungi. Promotes sympathetic innervation of peripheral organs by coordinating the communication between gamma-delta T cells and parenchymal cells. Stimulates sympathetic innervation of thermogenic adipose tissue by driving TGFB1 expression. Binding of IL17A-IL17F to IL17RA-IL17RC heterodimeric receptor complex triggers homotypic interaction of IL17RA and IL17RC chains with TRAF3IP2 adapter through SEFIR domains. This leads to downstream TRAF6-mediated activation of NF-kappa-B and MAPkinase pathways ultimately resulting in transcriptional activation of cytokines, chemokines, antimicrobial peptides and matrix metalloproteinases, with potential strong immune inflammation. Primarily induces neutrophil activation and recruitment at infection and inflammatory sites. Stimulates the production of antimicrobial beta-defensins DEFB1, DEFB103A, and DEFB104A by mucosal epithelial cells, limiting the entry of microbes through the epithelial barriers. Receptor for both IL17A and IL17F. Functionally, does not bind IL17A or IL17F. This is Interleukin-17 receptor C (IL17RC) from Homo sapiens (Human).